The primary structure comprises 640 residues: MMKIIAAFLFLLVTTFVSRCLSADIESDKQALLEFASLVPHSRKLNWNSTIPICASWTGITCSKNNARVTALRLPGSGLYGPLPEKTFEKLDALRIISLRSNHLQGNIPSVILSLPFIRSLYFHENNFSGTIPPVLSHRLVNLDLSANSLSGNIPTSLQNLTQLTDLSLQNNSLSGPIPNLPPRLKYLNLSFNNLNGSVPSSVKSFPASSFQGNSLLCGAPLTPCPENTTAPSPSPTTPTEGPGTTNIGRGTAKKVLSTGAIVGIAVGGSVLLFIILAIITLCCAKKRDGGQDSTAVPKAKPGRSDNKAEEFGSGVQEAEKNKLVFFEGSSYNFDLEDLLRASAEVLGKGSYGTTYKAILEEGTTVVVKRLKEVAAGKREFEQQMEAVGRISPHVNVAPLRAYYFSKDEKLLVYDYYQGGNFSMLLHGNNEGGRAALDWETRLRICLEAARGISHIHSASGAKLLHGNIKSPNVLLTQELHVCVSDFGIAPLMSHHTLIPSRSLGYRAPEAIETRKHTQKSDVYSFGVLLLEMLTGKAAGKTTGHEEVVDLPKWVQSVVREEWTGEVFDVELIKQQHNVEEEMVQMLQIAMACVSKHPDSRPSMEEVVNMMEEIRPSGSGPGSGNRASSPEMIRSSDSPV.

The signal sequence occupies residues 1–22; it reads MMKIIAAFLFLLVTTFVSRCLS. 5 LRR repeats span residues 93–115, 117–138, 139–162, 163–185, and 186–206; these read ALRI…ILSL, FIRS…VLSH, RLVN…QNLT, QLTD…PPRL, and KYLN…VKSF. The interval 222-249 is disordered; the sequence is LTPCPENTTAPSPSPTTPTEGPGTTNIG. Low complexity predominate over residues 226–247; that stretch reads PENTTAPSPSPTTPTEGPGTTN. Residues 260–280 traverse the membrane as a helical segment; sequence GAIVGIAVGGSVLLFIILAII. A disordered region spans residues 289-315; sequence DGGQDSTAVPKAKPGRSDNKAEEFGSG. Positions 341-614 constitute a Protein kinase domain; it reads RASAEVLGKG…EEVVNMMEEI (274 aa). Serine 343 is subject to Phosphoserine. Residue 347–355 participates in ATP binding; the sequence is LGKGSYGTT. Threonine 364 carries the post-translational modification Phosphothreonine. Lysine 369 contributes to the ATP binding site. Residues threonine 441, threonine 514, and threonine 564 each carry the phosphothreonine modification. The interval 612–640 is disordered; that stretch reads EEIRPSGSGPGSGNRASSPEMIRSSDSPV.

The protein belongs to the protein kinase superfamily. Tyr protein kinase family.

The protein resides in the membrane. This is Probable inactive receptor kinase At3g08680 from Arabidopsis thaliana (Mouse-ear cress).